Reading from the N-terminus, the 930-residue chain is Polypeptide N-acetylgalactosaminyltransferase 5 (930 aa).

The Cytoplasmic segment spans residues 1–12; that stretch reads MNKIRKFFRGSG. Residues 13–35 traverse the membrane as a helical; Signal-anchor for type II membrane protein segment; sequence RVLAFIFAASVIWLLFDMAALRL. Residues 36-930 are Lumenal-facing; it reads SFSEINAGLL…KWKFEKYYEV (895 aa). A disordered region spans residues 190 to 209; that stretch reads KQEAPQNYNVSSDTSKQASE. A compositionally biased stretch (polar residues) spans 193–209; that stretch reads APQNYNVSSDTSKQASE. Residues Asn198, Asn213, and Asn283 are each glycosylated (N-linked (GlcNAc...) asparagine). Ser285 is subject to Phosphoserine. Residues Asn287, Asn309, Asn355, and Asn387 are each glycosylated (N-linked (GlcNAc...) asparagine). The tract at residues 327-381 is disordered; sequence DTKEVPNSKTQTVFPKLLGGSPHKQIPRNQSKTSSSPPALKKAVSQSKPTISGGL. Positions 353–363 are enriched in polar residues; it reads PRNQSKTSSSP. Cystine bridges form between Cys476-Cys708, Cys699-Cys779, and Cys812-Cys825. Residues 485–594 are catalytic subdomain A; it reads LPTTSIIMCF…VGWLEPLLER (110 aa). Residues Asp526 and Arg555 each contribute to the substrate site. Asn568 carries N-linked (GlcNAc...) asparagine glycosylation. Asp578 lines the Mn(2+) pocket. Substrate is bound at residue Ser579. His580 is a binding site for Mn(2+). Residues 654–716 are catalytic subdomain B; that stretch reads IIRCPVMAGG…PCSRVGHIFR (63 aa). Trp685 is a substrate binding site. His713 contacts Mn(2+). Positions 716 and 721 each coordinate substrate. N-linked (GlcNAc...) asparagine glycosylation is found at Asn766, Asn817, and Asn835. A Ricin B-type lectin domain is found at 794–925; that stretch reads KAPVVRASGV…MELQQKWKFE (132 aa). Intrachain disulfides connect Cys848–Cys863 and Cys898–Cys913. N-linked (GlcNAc...) asparagine glycosylation occurs at Asn902.

It belongs to the glycosyltransferase 2 family. GalNAc-T subfamily. Interacts with EXT2. Does not interact with EXT1, EXTL1 or EXTL3. Requires Mn(2+) as cofactor. Expressed at low level. Not expressed before E7.5 during embryogenesis. Expressed in dental mesenchyme and tongue. Accumulates in a subset of mesenchymal cells at the ventral-most portions of the 12.5 dpc maxilla and mandible underlying the dental lamina.

It localises to the golgi apparatus membrane. The enzyme catalyses L-seryl-[protein] + UDP-N-acetyl-alpha-D-galactosamine = a 3-O-[N-acetyl-alpha-D-galactosaminyl]-L-seryl-[protein] + UDP + H(+). It carries out the reaction L-threonyl-[protein] + UDP-N-acetyl-alpha-D-galactosamine = a 3-O-[N-acetyl-alpha-D-galactosaminyl]-L-threonyl-[protein] + UDP + H(+). It functions in the pathway protein modification; protein glycosylation. Its function is as follows. Catalyzes the initial reaction in O-linked oligosaccharide biosynthesis, the transfer of an N-acetyl-D-galactosamine residue to a serine or threonine residue on the protein receptor. Has activity toward EA2 peptide substrate, but has a weak activity toward Muc2 or Muc1b substrates. The sequence is that of Polypeptide N-acetylgalactosaminyltransferase 5 (Galnt5) from Mus musculus (Mouse).